The sequence spans 502 residues: Glycerol kinase (502 aa).

Thr-14 contributes to the ADP binding site. 3 residues coordinate ATP: Thr-14, Thr-15, and Ser-16. Thr-14 contacts sn-glycerol 3-phosphate. Arg-18 is an ADP binding site. Sn-glycerol 3-phosphate contacts are provided by Arg-84, Glu-85, and Tyr-136. Residues Arg-84, Glu-85, and Tyr-136 each coordinate glycerol. Position 232 is a phosphohistidine; by HPr (His-232). Asp-246 serves as a coordination point for sn-glycerol 3-phosphate. Positions 246 and 247 each coordinate glycerol. Residues Thr-268 and Gly-311 each coordinate ADP. ATP is bound by residues Thr-268, Gly-311, Gln-315, and Gly-412. The ADP site is built by Gly-412 and Asn-416.

It belongs to the FGGY kinase family. In terms of assembly, homotetramer and homodimer (in equilibrium). In terms of processing, the phosphoenolpyruvate-dependent sugar phosphotransferase system (PTS), including enzyme I, and histidine-containing protein (HPr) are required for the phosphorylation, which leads to the activation of the enzyme.

The catalysed reaction is glycerol + ATP = sn-glycerol 3-phosphate + ADP + H(+). The protein operates within polyol metabolism; glycerol degradation via glycerol kinase pathway; sn-glycerol 3-phosphate from glycerol: step 1/1. With respect to regulation, activated by phosphorylation and inhibited by fructose 1,6-bisphosphate (FBP). Its function is as follows. Key enzyme in the regulation of glycerol uptake and metabolism. Catalyzes the phosphorylation of glycerol to yield sn-glycerol 3-phosphate. The chain is Glycerol kinase from Streptococcus pneumoniae (strain ATCC 700669 / Spain 23F-1).